The chain runs to 652 residues: UvrABC system protein C (652 aa).

One can recognise a GIY-YIG domain in the interval 19–96 (KTSGVYLWKD…IKKHKPRYNI (78 aa)). Positions 203-238 (EDVSGTLKEKMKEAAEKKEFEKAARLRDGIQAVYAL) constitute a UVR domain.

The protein belongs to the UvrC family. As to quaternary structure, interacts with UvrB in an incision complex.

The protein resides in the cytoplasm. The UvrABC repair system catalyzes the recognition and processing of DNA lesions. UvrC both incises the 5' and 3' sides of the lesion. The N-terminal half is responsible for the 3' incision and the C-terminal half is responsible for the 5' incision. In Treponema denticola (strain ATCC 35405 / DSM 14222 / CIP 103919 / JCM 8153 / KCTC 15104), this protein is UvrABC system protein C.